The chain runs to 468 residues: Glutamate--tRNA ligase 2 (468 aa).

Residues 9 to 19 (PSPTGFLHIGG) carry the 'HIGH' region motif. The short motif at 238-242 (KLSKR) is the 'KMSKS' region element. Lysine 241 contacts ATP.

It belongs to the class-I aminoacyl-tRNA synthetase family. Glutamate--tRNA ligase type 1 subfamily. In terms of assembly, monomer.

Its subcellular location is the cytoplasm. It catalyses the reaction tRNA(Glu) + L-glutamate + ATP = L-glutamyl-tRNA(Glu) + AMP + diphosphate. In terms of biological role, catalyzes the attachment of glutamate to tRNA(Glu) in a two-step reaction: glutamate is first activated by ATP to form Glu-AMP and then transferred to the acceptor end of tRNA(Glu). The protein is Glutamate--tRNA ligase 2 of Rhodospirillum centenum (strain ATCC 51521 / SW).